The primary structure comprises 232 residues: Mediator of RNA polymerase II transcription subunit 18 (232 aa).

This sequence belongs to the Mediator complex subunit 18 family. As to quaternary structure, component of the Mediator complex.

The protein resides in the nucleus. Component of the Mediator complex, a coactivator involved in the regulated transcription of nearly all RNA polymerase II-dependent genes. Mediator functions as a bridge to convey information from gene-specific regulatory proteins to the basal RNA polymerase II transcription machinery. Mediator is recruited to promoters by direct interactions with regulatory proteins and serves as a scaffold for the assembly of a functional preinitiation complex with RNA polymerase II and the general transcription factors. In Caenorhabditis elegans, this protein is Mediator of RNA polymerase II transcription subunit 18 (mdt-18).